Consider the following 51-residue polypeptide: Protein 1.4 (51 aa).

The signal sequence occupies residues 1 to 23; sequence MFKKVGKFLAALAAILTLAYILA. Residues 28–48 traverse the membrane as a helical segment; it reads VALVVVGACYLAAVCACVWSI.

It localises to the host membrane. The sequence is that of Protein 1.4 from Escherichia coli (Bacteriophage T7).